We begin with the raw amino-acid sequence, 212 residues long: Small ribosomal subunit protein uS2 (212 aa).

Residues 190–212 (LSPDAPEDQPAPVSEFETKVKMV) are disordered.

Belongs to the universal ribosomal protein uS2 family.

The polypeptide is Small ribosomal subunit protein uS2 (Ignicoccus hospitalis (strain KIN4/I / DSM 18386 / JCM 14125)).